A 160-amino-acid polypeptide reads, in one-letter code: 6-hydroxypseudooxynicotine dehydrogenase complex subunit beta (160 aa).

Residues 4-80 (FRLTVEVNGV…NSRIETVESL (77 aa)) form the 2Fe-2S ferredoxin-type domain. Residues Cys42, Cys47, Cys50, Cys62, Cys101, Cys104, Cys137, and Cys139 each contribute to the [2Fe-2S] cluster site.

Heterohexamer of 2 alpha (kdhA), 2 beta (kdhB) and 2 gamma (kdhC) subunit. Dimer of heterotrimers. [2Fe-2S] cluster is required as a cofactor.

The catalysed reaction is 6-hydroxypseudooxynicotine + A + H2O = 2,6-dihydroxypseudooxynicotine + AH2. Its pathway is alkaloid degradation; nicotine degradation. Its function is as follows. Molybdo-flavoprotein enzyme complex involved in nicotine degradation. The subunit gamma (large subunit) contains the substrate-binding sites, the subunit alpha (medium subunit) binds FAD and the subunit beta (small subunit) has a 2Fe-2S ferredoxin-type domain which binds 2 2Fe-2S clusters. This Paenarthrobacter nicotinovorans (Arthrobacter nicotinovorans) protein is 6-hydroxypseudooxynicotine dehydrogenase complex subunit beta (kdhB).